The chain runs to 686 residues: Potassium-transporting ATPase ATP-binding subunit (686 aa).

Helical transmembrane passes span 38-58 (VMFVVWAGSLLTTVLVVKDLV) and 64-84 (AAPLGFTVQVTLWLWFTVLFA). Positions 101 to 123 (ALRKMRKETTARRWKDGREERVP) are disordered. Over residues 107 to 123 (KETTARRWKDGREERVP) the composition is skewed to basic and acidic residues. 2 consecutive transmembrane segments (helical) span residues 224-244 (ILLVGLTLIFLLACVTLVPLA) and 257-277 (VALLVCLIPTTIGGLLSAIGI). The active-site 4-aspartylphosphate intermediate is Asp-308. Residues Asp-345, Glu-349, 378-385 (FTAQTRMS), and Lys-399 contribute to the ATP site. Residues Asp-522 and Asp-526 each coordinate Mg(2+). 3 helical membrane passes run 592–612 (FAILPALFMGVFPQIAPLNVM), 620–640 (AVLSAVIFNALIIILLIPLAL), and 666–686 (VIVPFVGIKVIDVLLGAVGLA).

Belongs to the cation transport ATPase (P-type) (TC 3.A.3) family. Type IA subfamily. As to quaternary structure, the system is composed of three essential subunits: KdpA, KdpB and KdpC.

The protein resides in the cell membrane. The catalysed reaction is K(+)(out) + ATP + H2O = K(+)(in) + ADP + phosphate + H(+). In terms of biological role, part of the high-affinity ATP-driven potassium transport (or Kdp) system, which catalyzes the hydrolysis of ATP coupled with the electrogenic transport of potassium into the cytoplasm. This subunit is responsible for energy coupling to the transport system and for the release of the potassium ions to the cytoplasm. This Myxococcus xanthus protein is Potassium-transporting ATPase ATP-binding subunit.